Consider the following 449-residue polypeptide: Aminopeptidase C (449 aa).

Active-site residues include C70, H364, and N385.

It belongs to the peptidase C1 family. As to quaternary structure, homohexamer.

It is found in the cytoplasm. The enzyme catalyses Inactivates bleomycin B2 (a cytotoxic glycometallopeptide) by hydrolysis of a carboxyamide bond of beta-aminoalanine, but also shows general aminopeptidase activity. The specificity varies somewhat with source, but amino acid arylamides of Met, Leu and Ala are preferred.. This chain is Aminopeptidase C (pepC), found in Lactobacillus delbrueckii subsp. lactis.